The chain runs to 302 residues: F-box protein At1g20360 (302 aa).

The F-box domain maps to 1 to 48 (MNSLPLHLLDQILFRLEPKSLAMMKSTNRTINSHISDPLFESEYFSRL).

The protein is F-box protein At1g20360 of Arabidopsis thaliana (Mouse-ear cress).